Consider the following 120-residue polypeptide: Flagellar protein FliT (120 aa).

The interval 1–50 is required for homodimerization; that stretch reads MERHQHLLSEYQQILTLSEQMLMLATVENWNTLVDLEMTYLKAVENTANI. A fliD binding region spans residues 60-98; sequence LQELLRQKLRSILENEIEIKRLLQRRLDKLSELVGQSTR.

Belongs to the FliT family. As to quaternary structure, homodimer. Interacts with FliD and FlhC.

The protein resides in the cytoplasm. Its subcellular location is the cytosol. Its function is as follows. Dual-function protein that regulates the transcription of class 2 flagellar operons and that also acts as an export chaperone for the filament-capping protein FliD. As a transcriptional regulator, acts as an anti-FlhDC factor; it directly binds FlhC, thus inhibiting the binding of the FlhC/FlhD complex to class 2 promoters, resulting in decreased expression of class 2 flagellar operons. As a chaperone, effects FliD transition to the membrane by preventing its premature polymerization, and by directing it to the export apparatus. This chain is Flagellar protein FliT, found in Yersinia pestis (strain Pestoides F).